Reading from the N-terminus, the 513-residue chain is MSAKKPLALVILDGWGYREDNSDNAIANANTPVMDSLIANEANTLISASGFDVGLPDGQMGNSEVGHTNIGAGRVVYQDLTRITKSIADGDFFENEALTTAMDKAINAGKAVHIMGLMSPGGVHSHEDHIAAAIEMAAKRGAEKIYLHCFLDGRDTPPRSAQNSLERFDALFAELGKGRTASLVGRYYAMDRDNNWDRVEVAYNLLSAAKADFTVDSAVAGLTDAYSRDENDEFVKATEIRAEGQESAAMVDGDTVIFMNYRADRAREITRAFEADFTSFVRTQTPALAEFVMLTRYAANIKLPAAFPPATLKNTLGEWLSKKGKKQLRISETEKYAHVTFFFNGGVEDEFDGETRSLVASPKVATYDLQPEMSAPELTEKLVAAIKGGEFDTIICNYPNGDMVGHTGVYDAAVKACEALDGCIGQVVEAIKSVGGQLLITADHGNAEMMINPETGGVHTAHTNLPVPLIYVGDKSLTLKDGGKLSDLAPTMLSLSDIEIPAEMTGQVLFDLK.

The Mn(2+) site is built by aspartate 13 and serine 63. The active-site Phosphoserine intermediate is the serine 63. Substrate-binding positions include histidine 124, 154-155, arginine 186, arginine 192, 262-265, and lysine 335; these read RD and RADR. 5 residues coordinate Mn(2+): aspartate 402, histidine 406, aspartate 443, histidine 444, and histidine 462.

Belongs to the BPG-independent phosphoglycerate mutase family. In terms of assembly, monomer. It depends on Mn(2+) as a cofactor.

It catalyses the reaction (2R)-2-phosphoglycerate = (2R)-3-phosphoglycerate. Its pathway is carbohydrate degradation; glycolysis; pyruvate from D-glyceraldehyde 3-phosphate: step 3/5. In terms of biological role, catalyzes the interconversion of 2-phosphoglycerate and 3-phosphoglycerate. This Photobacterium profundum (strain SS9) protein is 2,3-bisphosphoglycerate-independent phosphoglycerate mutase.